A 418-amino-acid chain; its full sequence is D-amino acid dehydrogenase 1 (418 aa).

3–17 is a binding site for FAD; the sequence is IMVLGGGVIGVTTAY.

The protein belongs to the DadA oxidoreductase family. FAD serves as cofactor.

It catalyses the reaction a D-alpha-amino acid + A + H2O = a 2-oxocarboxylate + AH2 + NH4(+). Its pathway is amino-acid degradation; D-alanine degradation; NH(3) and pyruvate from D-alanine: step 1/1. In terms of biological role, oxidative deamination of D-amino acids. This is D-amino acid dehydrogenase 1 (dadA1) from Mesorhizobium japonicum (strain LMG 29417 / CECT 9101 / MAFF 303099) (Mesorhizobium loti (strain MAFF 303099)).